The following is a 2180-amino-acid chain: Genome polyprotein (2180 aa).

Disordered stretches follow at residues 507–529 (DGAD…AKDP), 624–679 (QPQK…YPIQ), 703–809 (KRAK…NTLP), and 822–848 (SEVE…PPKM). The stretch at 573 to 624 (SKNQGLIRVLEQQLQDLNKRICPPGTSLFHFFDQQKSEMASLKEQIRLLKEQ) forms a coiled coil. 2 stretches are compositionally biased toward polar residues: residues 631–643 (DTPS…QPFH) and 670–679 (PSLFSQYPIQ). Positions 703 to 716 (KRAKKKLQKDEVKQ) are enriched in basic and acidic residues. The span at 759-771 (SEDTSSQSYISTE) shows a compositional bias: polar residues. The span at 784 to 807 (SEESTQLSQLSSSSNDSPENNENT) shows a compositional bias: low complexity. Positions 822–832 (SEVEDEVDGMT) are enriched in acidic residues. Residues 1113–1126 (CFTCGKIGHFSRNC) form a CCHC-type zinc finger. D1227 functions as the For protease activity; shared with dimeric partner in the catalytic mechanism. Positions 1480, 1543, and 1544 each coordinate Mg(2+). Disordered regions lie at residues 1824-1848 (RRTR…YKLS), 2115-2145 (NIVK…KNKC), and 2161-2180 (YSTK…EPCI). Positions 1828 to 1847 (SNSTKSKADSSQSTGSSYKL) are enriched in polar residues. Residues 2120–2145 (SPRKRKGKAKSKSSTRNEKRRAKNKC) show a composition bias toward basic residues. Over residues 2163–2180 (TKPSTPSWTQDSSSEPCI) the composition is skewed to polar residues.

It belongs to the Petuviruses genome polyprotein family.

The enzyme catalyses DNA(n) + a 2'-deoxyribonucleoside 5'-triphosphate = DNA(n+1) + diphosphate. Functionally, encodes presumably for at least four polypeptides: Movement protein (MP), capsid protein (CP), Protease (PR), and reverse transcriptase (RT). The chain is Genome polyprotein from Petunia (PVCV).